The chain runs to 982 residues: E3 ubiquitin-protein ligase CBL-B (982 aa).

The tract at residues 35-167 (PPKQAAADRR…KAIFPNGQFQ (133 aa)) is 4H. In terms of domain architecture, Cbl-PTB spans 35-343 (PPKQAAADRR…GRSYNPDLTG (309 aa)). The EF-hand-like stretch occupies residues 168–240 (GDNFRITKAD…FEFDIFTRLF (73 aa)). 5 residues coordinate Ca(2+): aspartate 221, threonine 223, asparagine 225, tyrosine 227, and glutamate 232. Positions 241 to 343 (QPWGSILRNW…GRSYNPDLTG (103 aa)) are SH2-like. The residue at position 282 (serine 282) is a Phosphoserine; by PKC/PRKCQ. Position 286 (arginine 286) interacts with 4-O-phospho-L-tyrosine. The tract at residues 344–372 (LCEPTPHDHIKVTQEQYELYCEMGSTFQL) is linker. At tyrosine 363 the chain carries Phosphotyrosine. The RING-type zinc-finger motif lies at 373–412 (CKICAENDKDVKIEPCGHLMCTSCLTAWQESDGQGCPFCR). Residues 465–588 (ASVRKCTDRQ…SVPSRDQPMP (124 aa)) form a disordered region. The segment covering 473–486 (RQNSPVTSPGSSPL) has biased composition (polar residues). A phosphoserine mark is found at serine 476, serine 480, serine 484, serine 521, serine 525, and serine 529. An interaction with VAV1 region spans residues 543-567 (PLPAPPPPLRDPPPPPERPPPIPPD). A compositionally biased stretch (pro residues) spans 544 to 566 (LPAPPPPLRDPPPPPERPPPIPP). Serine 633 is subject to Phosphoserine. 2 positions are modified to phosphotyrosine: tyrosine 664 and tyrosine 708. Disordered stretches follow at residues 702–723 (EDDD…SQPS) and 745–929 (THGA…EAAL). Residues 714–723 (HPVSLNSQPS) show a composition bias toward polar residues. A compositionally biased stretch (pro residues) spans 819–828 (PSLPPPPPPA). Low complexity predominate over residues 838 to 848 (PPGSSSRPSSG). A compositionally biased stretch (polar residues) spans 884–899 (RASQDYDQLPSSSDGS). Position 889 is a phosphotyrosine (tyrosine 889). Residues 891–927 (QLPSSSDGSQAPARPPKPRPRRTAPEIHHRKPHGPEA) form an interaction with SH3KBP1 region. Positions 906–922 (PKPRPRRTAPEIHHRKP) are enriched in basic residues. One can recognise a UBA domain in the interval 931-970 (NVDAKIAKLMGEGYAFEEVKRALEIAQNNVEVARSILREF).

In terms of assembly, interacts with SH3 domain-containing proteins LCK, CRK and SORBS1. Interacts with LCP2 and ZAP70. Interacts with CBL. Interacts with SH3 domain-containing proteins VAV1, FYN, FGR, PLCG1, GRB2, CRKL, PIK3R1 and SH3KBP1/CIN85. Identified in heterotrimeric complexes with SH3KBP1/CIN85, CD2AP and ARHGEF7, where one CBLB peptide binds two copies of the other protein. Interacts with poly-ubiquitinated proteins. Dimerization is required for the binding of poly-ubiquitin, but not for the binding of mono-ubiquitin. Interacts with EGFR (phosphorylated). Interacts with IFT20. In terms of processing, phosphorylated on tyrosine and serine residues upon TCR or BCR activation. Phosphorylated on Tyr-664 and Tyr-708 in adipocytes following insulin stimulation. Post-translationally, auto-ubiquitinated upon EGF-mediated cell activation or upon T-cell costimulation by CD28; which promotes proteasomal degradation.

The protein resides in the cytoplasm. It catalyses the reaction S-ubiquitinyl-[E2 ubiquitin-conjugating enzyme]-L-cysteine + [acceptor protein]-L-lysine = [E2 ubiquitin-conjugating enzyme]-L-cysteine + N(6)-ubiquitinyl-[acceptor protein]-L-lysine.. It participates in protein modification; protein ubiquitination. Functionally, E3 ubiquitin-protein ligase which accepts ubiquitin from specific E2 ubiquitin-conjugating enzymes, and transfers it to substrates, generally promoting their degradation by the proteasome. Negatively regulates TCR (T-cell receptor), BCR (B-cell receptor) and FCER1 (high affinity immunoglobulin epsilon receptor) signal transduction pathways. In naive T-cells, inhibits VAV1 activation upon TCR engagement and imposes a requirement for CD28 costimulation for proliferation and IL-2 production. Also acts by promoting PIK3R1/p85 ubiquitination, which impairs its recruitment to the TCR and subsequent activation. In activated T-cells, inhibits PLCG1 activation and calcium mobilization upon restimulation and promotes anergy. In B-cells, acts by ubiquitinating SYK and promoting its proteasomal degradation. Slightly promotes SRC ubiquitination. May be involved in EGFR ubiquitination and internalization. May be functionally coupled with the E2 ubiquitin-protein ligase UB2D3. In association with CBL, required for proper feedback inhibition of ciliary platelet-derived growth factor receptor-alpha (PDGFRA) signaling pathway via ubiquitination and internalization of PDGFRA. The protein is E3 ubiquitin-protein ligase CBL-B (Cblb) of Mus musculus (Mouse).